A 112-amino-acid chain; its full sequence is Urocortin-2 (112 aa).

The N-terminal stretch at methionine 1–valine 22 is a signal peptide. The propeptide occupies threonine 23–serine 70. The interval threonine 27–arginine 66 is disordered. The span at threonine 38–alanine 58 shows a compositional bias: low complexity.

This sequence belongs to the sauvagine/corticotropin-releasing factor/urotensin I family. As to quaternary structure, binds with high affinity to CRF receptors 2-alpha and 2-beta. Glycosylated.

Its subcellular location is the secreted. In terms of biological role, suppresses food intake, delays gastric emptying and decreases heat-induced edema. Might represent an endogenous ligand for maintaining homeostasis after stress. The polypeptide is Urocortin-2 (UCN2) (Homo sapiens (Human)).